A 580-amino-acid polypeptide reads, in one-letter code: Acyl--CoA ligase GME11374 (580 aa).

Belongs to the ATP-dependent AMP-binding enzyme family.

The protein operates within secondary metabolite biosynthesis. Acyl--CoA ligase; part of the gene cluster that mediates the biosynthesis of dibenzodioxocinones such as pestalotiollide B, a novel class of inhibitors against cholesterol ester transfer protein (CEPT). The biosynthesis initiates from condensation of acetate and malonate units catalyzed by the non-reducing PKS pks8/GME11356. Pks8/GME11356 lacks a thioesterase (TE) domain, which is important to the cyclizing of the third ring of atrochrysone carboxylic acid, and the esterase GME11355 might play the role of TE and catalyzes the cyclization reaction of the C ring. The lactamase-like protein GME11357 (or other beta-lactamases in Pestalotiopsis microspora) probably hydrolyzes the thioester bond between the ACP of pks8/GME11356 and the intermediate to release atrochrysone carboxylic acid, which is spontaneously dehydrates to form endocrocin anthrone. Endocrocin anthrone is further converted to emodin via the endocrocin intermediate. Emodin is then oxidized by several enzymes such as the Baeyer-Villiger oxidase GME11358, the oxidoreductase GME11367, the short chain dehydrogenase/reductase GME11373, as well as by other oxidoreductases from the cluster, to modify the A and C rings and open the B ring, and finally yield monodictyphenone. The prenyltransferase GME11375 may catalyze the addition reaction between the C5 side chains and the carbon bone of dibenzodioxocinones. The remaining biochemical reactions to the final product dibenzodioxocinones should be methylation catalyzed by methyltransferase GME11366 and reduction and lactonization reaction catalyzed by a series of oxidordeuctases. This is Acyl--CoA ligase GME11374 from Pestalotiopsis microspora.